A 778-amino-acid chain; its full sequence is pH-response regulator protein palH/prr-4 (778 aa).

The Extracellular portion of the chain corresponds to 1–108 (MEPRQLFSDP…DPFYASTFPQ (108 aa)). Residues 109–129 (CYALAATTIIAYTLVIMLFIT) traverse the membrane as a helical segment. Residues 130–160 (PRSFLDGGVVVLGRKGFTNGGGGTSIGGRPW) lie on the Periplasmic side of the membrane. The helical transmembrane segment at 161-181 (LQKVAALSVAISLTIANAATF) threads the bilayer. Residues 182-201 (RAAEQQYSWGVQNAKQLQED) lie on the Extracellular side of the membrane. A helical transmembrane segment spans residues 202–222 (VLGGAELKIIRIISDTFLWLA). At 223–237 (QAQTLIRLFPRQREK) the chain is on the periplasmic side. The chain crosses the membrane as a helical span at residues 238–258 (VIIKWTAFALITLDVIFQSLN). Residues 259–275 (SFKYGGSDLTRPKFTEA) lie on the Extracellular side of the membrane. The chain crosses the membrane as a helical span at residues 276–296 (VPALSYLFALALGVLYAAWVL). The Periplasmic segment spans residues 297 to 314 (YYSIMKKRYAFYHPLMKN). A helical transmembrane segment spans residues 315-335 (MILVAVLSVVSILVPVVFFIL). The Extracellular portion of the chain corresponds to 336 to 341 (DISKPD). The helical transmembrane segment at 342-362 (FAGWGDYVRWVGAAAASVIVW) threads the bilayer. Residues 363 to 778 (EWVERIEALE…RSDSSTTPSP (416 aa)) lie on the Periplasmic side of the membrane. Disordered regions lie at residues 394 to 499 (ASQS…DTTS), 514 to 605 (ELTS…DENS), and 660 to 778 (ELNH…TPSP). Residues 446–456 (HRTEPSSRNEP) show a composition bias toward basic and acidic residues. Polar residues predominate over residues 457-466 (NEGSSPVAET). Composition is skewed to basic and acidic residues over residues 588 to 605 (FVTR…DENS) and 661 to 675 (LNHS…EESR). Residues 720–732 (PIVTQGSFTNNRY) show a composition bias toward polar residues. Residues 749 to 759 (ARAPSQPQSPS) are compositionally biased toward low complexity. Residues 769–778 (RSDSSTTPSP) are compositionally biased toward polar residues.

This sequence belongs to the palH/RIM21 family.

The protein localises to the cell membrane. Required for the proteolytic cleavage of the transcription factor pacc-1 in response to alkaline ambient pH. This chain is pH-response regulator protein palH/prr-4 (prr-4), found in Neurospora crassa (strain ATCC 24698 / 74-OR23-1A / CBS 708.71 / DSM 1257 / FGSC 987).